A 396-amino-acid polypeptide reads, in one-letter code: S-adenosylmethionine synthase (396 aa).

An ATP-binding site is contributed by His16. Asp18 lines the Mg(2+) pocket. Glu44 is a binding site for K(+). Residues Glu57 and Gln100 each coordinate L-methionine. Residues 100–110 (QSPDINQGVDR) are flexible loop. ATP is bound by residues 165–167 (DAK), Asp240, 246–247 (RK), Ala263, and Lys267. Asp240 contributes to the L-methionine binding site. Lys271 is a binding site for L-methionine.

This sequence belongs to the AdoMet synthase family. As to quaternary structure, homotetramer; dimer of dimers. It depends on Mg(2+) as a cofactor. Requires K(+) as cofactor.

Its subcellular location is the cytoplasm. The catalysed reaction is L-methionine + ATP + H2O = S-adenosyl-L-methionine + phosphate + diphosphate. It functions in the pathway amino-acid biosynthesis; S-adenosyl-L-methionine biosynthesis; S-adenosyl-L-methionine from L-methionine: step 1/1. Its function is as follows. Catalyzes the formation of S-adenosylmethionine (AdoMet) from methionine and ATP. The overall synthetic reaction is composed of two sequential steps, AdoMet formation and the subsequent tripolyphosphate hydrolysis which occurs prior to release of AdoMet from the enzyme. The chain is S-adenosylmethionine synthase from Pseudomonas fluorescens (strain Pf0-1).